A 428-amino-acid polypeptide reads, in one-letter code: UPF0229 protein YeaH (428 aa).

Over residues 78–90 (GNDHFIQNDRIER) the composition is skewed to basic and acidic residues. Positions 78 to 111 (GNDHFIQNDRIERPQGGGGGGSGSGQGQASQDGE) are disordered. The span at 92–103 (QGGGGGGSGSGQ) shows a compositional bias: gly residues.

This sequence belongs to the UPF0229 family.

The polypeptide is UPF0229 protein YeaH (Salmonella enteritidis PT4 (strain P125109)).